The chain runs to 532 residues: Drimenyl diphosphate synthase (532 aa).

4 residues coordinate (2E,6E)-farnesyl diphosphate: Arg121, Lys122, Gln152, and Trp154. Glu158 is a binding site for Mg(2+). 4 PFTB repeats span residues 275–317, 325–367, 428–469, and 475–518; these read PAAM…RVAG, IAAA…APNP, KRQA…SRDG, and LARA…CVLL. Asp304 acts as the Proton donor in catalysis. Arg502 contacts (2E,6E)-farnesyl diphosphate.

The protein belongs to the terpene cyclase/mutase family. The cofactor is Mg(2+). Ni(2+) serves as cofactor. Co(2+) is required as a cofactor.

The enzyme catalyses (2E,6E)-farnesyl diphosphate = (5S,9S,10S)-drim-7-en-11-yl diphosphate. Catalyzes the cyclization of farnesyl diphosphate (FPP) to drimenyl diphosphate. This is Drimenyl diphosphate synthase from Streptantibioticus cattleyicolor (strain ATCC 35852 / DSM 46488 / JCM 4925 / NBRC 14057 / NRRL 8057) (Streptomyces cattleya).